A 265-amino-acid chain; its full sequence is MSEEVTYADLQFQNSSEMEKIPEIGKFGEKAPPAPSHVWRPAALFLTLLCLLLLIGLGVLASMFHVTLKIEMKKMNKLQNISEELQRNISLQLMSNMNISNKIRNLSTTLQTIATKLCRELYSKEQEHKCKPCPRRWIWHKDSCYFLSDDVQTWQESKMACAAQNASLLKINNKNALEFIKSQSRSYDYWLGLSPEEDSTRGMRVDNIINSSAWVIRNAPDLNNMYCGYINRLYVQYYHCTYKKRMICEKMANPVQLGSTYFREA.

Over 1 to 43 the chain is Cytoplasmic; it reads MSEEVTYADLQFQNSSEMEKIPEIGKFGEKAPPAPSHVWRPAA. An ITIM motif motif is present at residues 5–10; that stretch reads VTYADL. A Phosphotyrosine modification is found at Y7. The chain crosses the membrane as a helical; Signal-anchor for type II membrane protein span at residues 44–64; the sequence is LFLTLLCLLLLIGLGVLASMF. Residues 65 to 265 are Extracellular-facing; sequence HVTLKIEMKK…QLGSTYFREA (201 aa). 2 N-linked (GlcNAc...) asparagine glycosylation sites follow: N88 and N98. 4 disulfide bridges follow: C118-C130, C133-C144, C161-C248, and C227-C240. Residues 140-249 form the C-type lectin domain; that stretch reads HKDSCYFLSD…CTYKKRMICE (110 aa). An N-linked (GlcNAc...) asparagine glycan is attached at N165.

As to quaternary structure, homodimer; disulfide-linked. Interacts (when the ITIM motif is phosphorylated) with PTPN6 and PTPN11. Post-translationally, phosphorylated at Tyr-7 by SRC in the ITIM motif following ligand-binding, promoting recruitment of tyrosine-protein phosphatases PTPN6 and PTPN11. Highly N-glycosylated; glycosylation varies between cell types. In terms of tissue distribution, preferentially expressed in lymphoid tissues and immune cells, including natural killer (NK) cells, T-cells, dendritic cells and monocytes or macrophages. Detected in spleen macrophage-rich red pulp and in lymph node (at protein level). Detected in peripheral blood leukocytes, dendritic cells, bone marrow, monocytes, mononuclear leukocytes and macrophages.

It localises to the cell membrane. Its function is as follows. Myeloid inhibitory C-type lectin receptor that acts as a negative regulator of myeloid cell activation. Myeloid cell inhibition is required to limit proinflammatory pathways and protect against excessive inflammation. Specifically recognizes and binds various structures, such as neutrophil extracellular traps (NETs) or monosodium urate crystals. Also acts as a pattern-recognition receptor for pathogen-associated molecules, such as plasmodium hemozoin or mycobacterial micolic acid. Ligand-binding induces phosphorylation of its ITIM motif, followed by recruitment of tyrosine-protein phosphatases PTPN6 and PTPN11, which counteract tyrosine-protein kinase SYK, thereby preventing myeloid cell activation. Acts as a pattern-recognition receptor for NETs in neutrophils: specifically recognizes DNA in NETs, leading to inhibit neutrophil activation and limit further NET formation. This regulation is essential for controlling key neutrophil responses and limit NET-mediated inflammatory conditions. Also recognizes dead cells by acting as a receptor for monosodium urate crystals, leading to down-regulate neutrophil activation. Binding to monosodium urate crystals also promotes the type I interferon response. Acts as an inhibitor of natural killer (NK) cell cytotoxicity. Also acts as an ihibitor of dendritic cell maturation in an IL10-dependent manner. The polypeptide is C-type lectin domain family 12 member A (Homo sapiens (Human)).